A 138-amino-acid polypeptide reads, in one-letter code: Probable lactoylglutathione lyase (138 aa).

The VOC domain maps to 5-129; sequence RILHTMLRVG…DGYMIELIQN (125 aa). Histidine 8 lines the Ni(2+) pocket. Arginine 12 lines the substrate pocket. Residue glutamate 59 coordinates Ni(2+). Substrate contacts are provided by asparagine 63 and histidine 77. Ni(2+)-binding residues include histidine 77 and glutamate 125. The active-site Proton donor/acceptor is glutamate 125.

It belongs to the glyoxalase I family. Requires Ni(2+) as cofactor.

The catalysed reaction is (R)-S-lactoylglutathione = methylglyoxal + glutathione. The protein operates within secondary metabolite metabolism; methylglyoxal degradation; (R)-lactate from methylglyoxal: step 1/2. Catalyzes the conversion of hemimercaptal, formed from methylglyoxal and glutathione, to S-lactoylglutathione. In Vibrio cholerae serotype O1 (strain ATCC 39315 / El Tor Inaba N16961), this protein is Probable lactoylglutathione lyase (gloA).